The sequence spans 231 residues: NADH-ubiquinone oxidoreductase chain 4 (231 aa).

6 helical membrane passes run 1 to 21, 34 to 54, 61 to 80, 84 to 106, 128 to 148, and 169 to 189; these read PIAGSMVLAAILLKLGGYGII, LFLPFIVLALWGAILANLTCL, SLIAYSSISHMGLVVAAIII, WGLSGAMALMIAHGFTSSALFCL, ILPMATTWWLLANLMNIATPP, and TIILLGLSMLITASYSLHMFL.

This sequence belongs to the complex I subunit 4 family.

The protein localises to the mitochondrion membrane. The catalysed reaction is a ubiquinone + NADH + 5 H(+)(in) = a ubiquinol + NAD(+) + 4 H(+)(out). Core subunit of the mitochondrial membrane respiratory chain NADH dehydrogenase (Complex I) that is believed to belong to the minimal assembly required for catalysis. Complex I functions in the transfer of electrons from NADH to the respiratory chain. The immediate electron acceptor for the enzyme is believed to be ubiquinone. This is NADH-ubiquinone oxidoreductase chain 4 (MT-ND4) from Metlapilcoatlus nummifer (Mexican jumping pitviper).